A 672-amino-acid chain; its full sequence is DNA ligase (672 aa).

Residues 32–36 (DEKYD), 82–83 (SL), and Glu-113 each bind NAD(+). Residue Lys-115 is the N6-AMP-lysine intermediate of the active site. NAD(+) contacts are provided by Arg-136, Glu-173, Lys-290, and Lys-314. The Zn(2+) site is built by Cys-408, Cys-411, Cys-427, and Cys-433. Positions 592–672 (DNNNTLFRKK…EFLNIINVYL (81 aa)) constitute a BRCT domain.

Belongs to the NAD-dependent DNA ligase family. LigA subfamily. It depends on Mg(2+) as a cofactor. Mn(2+) is required as a cofactor.

The enzyme catalyses NAD(+) + (deoxyribonucleotide)n-3'-hydroxyl + 5'-phospho-(deoxyribonucleotide)m = (deoxyribonucleotide)n+m + AMP + beta-nicotinamide D-nucleotide.. Its function is as follows. DNA ligase that catalyzes the formation of phosphodiester linkages between 5'-phosphoryl and 3'-hydroxyl groups in double-stranded DNA using NAD as a coenzyme and as the energy source for the reaction. It is essential for DNA replication and repair of damaged DNA. The chain is DNA ligase from Buchnera aphidicola subsp. Baizongia pistaciae (strain Bp).